A 301-amino-acid polypeptide reads, in one-letter code: Peroxisome assembly protein 26 (301 aa).

The Cytoplasmic portion of the chain corresponds to M1–Q246. Residues P247–L263 traverse the membrane as a helical; Signal-anchor for type II membrane protein segment. Residues R264–D301 are Peroxisomal-facing.

The protein belongs to the peroxin-26 family. In terms of assembly, interacts directly with PEX6 via its cytoplasmic domain. Interacts indirectly with PEX1, via its interaction with PEX6.

The protein resides in the peroxisome membrane. In terms of biological role, peroxisomal docking factor that anchors PEX1 and PEX6 to peroxisome membranes. It is therefore required for the formation of the PEX1-PEX6 AAA ATPase complex, a complex that mediates the extraction of the PEX5 receptor from peroxisomal membrane. The polypeptide is Peroxisome assembly protein 26 (Pex26) (Cricetulus griseus (Chinese hamster)).